The chain runs to 1133 residues: Nuclear pore complex-interacting protein family member B5 (1133 aa).

Residues tryptophan 60–valine 84 traverse the membrane as a helical segment. Disordered regions lie at residues asparagine 241 to serine 262, leucine 290 to proline 575, and glutamate 868 to serine 1133. Residues glutamine 252 to serine 262 are compositionally biased toward polar residues. The segment covering proline 349–proline 359 has biased composition (pro residues). 7 stretches are compositionally biased toward basic and acidic residues: residues aspartate 406 to arginine 416, aspartate 448 to arginine 458, aspartate 490 to arginine 500, aspartate 528 to arginine 538, aspartate 903 to arginine 913, aspartate 945 to arginine 955, and aspartate 987 to arginine 997.

It belongs to the NPIP family.

The protein resides in the membrane. The sequence is that of Nuclear pore complex-interacting protein family member B5 (NPIPB5) from Homo sapiens (Human).